The chain runs to 842 residues: Cation/H(+) antiporter 20 (842 aa).

A run of 12 helical transmembrane segments spans residues 26-46, 55-75, 86-106, 122-142, 155-175, 193-213, 228-248, 283-303, 320-340, 353-373, 380-400, and 413-433; these read FPLL…LAVL, VIAE…RNMA, MPIL…LVGL, GIAV…AFVI, YAEF…PVLA, MAAA…AVAL, LVSL…LVVI, FATD…GLTI, FVSG…TDVA, LVVV…AVMV, ALTL…VLNI, and AILV…VMAI. Over residues 585 to 595 the composition is skewed to basic and acidic residues; sequence DHGHSHHHQDG. The interval 585-605 is disordered; sequence DHGHSHHHQDGGGDGNVPENV.

The protein belongs to the monovalent cation:proton antiporter 2 (CPA2) transporter (TC 2.A.37) family. CHX (TC 2.A.37.4) subfamily. Expressed in leaves and stems. Preferentially expressed in guards cells.

It is found in the endomembrane system. Its function is as follows. Operates as a K(+)/H(+) antiporter that maintains K(+) homeostasis in guard cells and could regulate pH. Plays a critical role in osmoregulation through the control of stomates opening. The chain is Cation/H(+) antiporter 20 (CHX20) from Arabidopsis thaliana (Mouse-ear cress).